The following is a 915-amino-acid chain: Protein inturned (915 aa).

The tract at residues N88–V144 is disordered. Basic residues predominate over residues K104–Q118. Polar residues predominate over residues Q128–G139. The PDZ domain maps to S165–T253. Residues G688–K738 are disordered.

This sequence belongs to the inturned family.

The protein localises to the cytoplasm. Its subcellular location is the cell surface. It is found in the cytoskeleton. It localises to the cilium basal body. In terms of biological role, plays a key role in ciliogenesis and embryonic development. Regulator of cilia formation by controlling the organization of the apical actin cytoskeleton and the positioning of the basal bodies at the apical cell surface, which in turn is essential for the normal orientation of elongating ciliary microtubules. Plays a key role in definition of cell polarity via its role in ciliogenesis but not via conversion extension. Has an indirect effect on hedgehog signaling. In Danio rerio (Zebrafish), this protein is Protein inturned (intu).